Consider the following 472-residue polypeptide: Glutamine synthetase (472 aa).

In terms of domain architecture, GS beta-grasp spans 13–101 (SKARFVDLRF…TCDVIDPADG (89 aa)). Residues 108–472 (PRSIARRAEA…PLEFEMYYSL (365 aa)) form the GS catalytic domain. Residues Glu133 and Glu135 each coordinate Mg(2+). Residue Glu211 participates in ATP binding. Residues Glu216 and Glu224 each coordinate Mg(2+). Residues 268–269 (NG) and Gly269 each bind L-glutamate. His273 contacts Mg(2+). Residues 275 to 277 (HQS) and Ser277 each bind ATP. Residues Arg325, Glu331, and Arg343 each contribute to the L-glutamate site. 3 residues coordinate ATP: Arg343, Arg348, and Lys356. Glu361 is a binding site for Mg(2+). Arg363 contributes to the L-glutamate binding site. Tyr401 carries the O-AMP-tyrosine modification.

Belongs to the glutamine synthetase family. Oligomer of 12 subunits arranged in the form of two hexameric ring. Mg(2+) serves as cofactor.

The protein resides in the cytoplasm. It catalyses the reaction L-glutamate + NH4(+) + ATP = L-glutamine + ADP + phosphate + H(+). Its activity is regulated as follows. The activity of this enzyme could be controlled by adenylation under conditions of abundant glutamine. Its function is as follows. Catalyzes the ATP-dependent biosynthesis of glutamine from glutamate and ammonia. The sequence is that of Glutamine synthetase from Neisseria gonorrhoeae.